We begin with the raw amino-acid sequence, 181 residues long: MNNDSLAIIKQSIKTIPDYPKPGILFRDVTSLLEDHTAYKATMDILVQHYKDHGFTKIVGTEARGFLFGAPLALELGVGFVPVRKPGKLPRETISESYELEYGHDVLELHTDAINENDKVLVVDDLLATGGTIEATVKLIRKLGGEVKHAAFVISLPDLGGAKRLEEMDLELVTLCEFEGE.

This sequence belongs to the purine/pyrimidine phosphoribosyltransferase family. Homodimer.

It localises to the cytoplasm. The catalysed reaction is AMP + diphosphate = 5-phospho-alpha-D-ribose 1-diphosphate + adenine. Its pathway is purine metabolism; AMP biosynthesis via salvage pathway; AMP from adenine: step 1/1. Functionally, catalyzes a salvage reaction resulting in the formation of AMP, that is energically less costly than de novo synthesis. This Shewanella woodyi (strain ATCC 51908 / MS32) protein is Adenine phosphoribosyltransferase.